We begin with the raw amino-acid sequence, 433 residues long: MSDSPQTIQHNVPLAELDPDVARAIDGELARQRNTLEMIASENFVPRAVLQAQGSVLTNKYAEGYPGRRYYGGCEHVDVIEDLARDRAKQVFGAEFANVQPHAGAQANAAVLMALASPRDKILGLSLAHGGHLTHGMHLNFSGKLYEAIAYEVDPETMRIDMDKVREQALKEKPTVIIAGWSAYPRHQDFAAFRSIADEVGAKLWVDMAHFAGLVAAGLHPSPVPHADVVSTTVHKTLGGPRSGLILAKQEWAKKLNSAVFPGQQGGPLMHAVAAKAVAMKVAQTEEFRDRQARTLEGAKILAERLSAADTKGAGVEVLTGGTDVHLVLADLRHSELDGQQAEDLLHEVGITVNRNAVPFDPRPPMVTSGLRIGTPALASRGLDTAAFTEVADVIGTALAQGKNADVEALRARVSKVAEDFPLYEGLEDWKLV.

Residues Leu127 and 131–133 contribute to the (6S)-5,6,7,8-tetrahydrofolate site; that span reads GHL. Lys236 is modified (N6-(pyridoxal phosphate)lysine).

It belongs to the SHMT family. In terms of assembly, homodimer. Requires pyridoxal 5'-phosphate as cofactor.

Its subcellular location is the cytoplasm. The catalysed reaction is (6R)-5,10-methylene-5,6,7,8-tetrahydrofolate + glycine + H2O = (6S)-5,6,7,8-tetrahydrofolate + L-serine. Its pathway is one-carbon metabolism; tetrahydrofolate interconversion. It functions in the pathway amino-acid biosynthesis; glycine biosynthesis; glycine from L-serine: step 1/1. Its function is as follows. Catalyzes the reversible interconversion of serine and glycine with tetrahydrofolate (THF) serving as the one-carbon carrier. This reaction serves as the major source of one-carbon groups required for the biosynthesis of purines, thymidylate, methionine, and other important biomolecules. Also exhibits THF-independent aldolase activity toward beta-hydroxyamino acids, producing glycine and aldehydes, via a retro-aldol mechanism. This is Serine hydroxymethyltransferase from Corynebacterium urealyticum (strain ATCC 43042 / DSM 7109).